A 135-amino-acid polypeptide reads, in one-letter code: Small ribosomal subunit protein bS16 (135 aa).

Residues 94–135 (IGTEMETWQQRNDSRLKRGLDRKAIRRKRKKEAEAKEKESAG) are disordered. Basic and acidic residues-rich tracts occupy residues 105–116 (NDSRLKRGLDRK) and 124–135 (KEAEAKEKESAG).

It belongs to the bacterial ribosomal protein bS16 family.

In Chloroherpeton thalassium (strain ATCC 35110 / GB-78), this protein is Small ribosomal subunit protein bS16.